A 195-amino-acid chain; its full sequence is Interferon omega-1 (195 aa).

The or 23 in some molecules signal peptide spans M1–S21. Cystine bridges form between C24–C122 and C52–C162. N101 carries N-linked (GlcNAc...) asparagine glycosylation.

This sequence belongs to the alpha/beta interferon family.

Its subcellular location is the secreted. The protein is Interferon omega-1 (IFNW1) of Homo sapiens (Human).